A 502-amino-acid polypeptide reads, in one-letter code: Zinc finger protein 488 (502 aa).

The SET domain maps to 8–130; the sequence is RSLWTNDSKI…EGEELLVWYD (123 aa). S-adenosyl-L-methionine is bound at residue Tyr-129. The C2H2-type 1; atypical zinc-finger motif lies at 151–174; sequence YTCTRCGQAFKNENPFLAHCRFLC. Disordered stretches follow at residues 267 to 303 and 338 to 361; these read SEPTDNAQTNESKISKNSAFTEVRKAPEPSNPEKSSR and PSKRALAEAQNPSPPDTDNSLDSF. Positions 269-286 are enriched in polar residues; it reads PTDNAQTNESKISKNSAF. 2 C2H2-type zinc fingers span residues 438–460 and 479–501; these read NWCAKCNLSFRMTSDLVFHMRSH and LTCPICHEYFRERHHLSRHMTSH.

It belongs to the krueppel C2H2-type zinc-finger protein family. Expressed in pMN progenitors and oligodendrocyte lineage cells in the embryo with expression declining in oligodendrocytes undergoing differentiation.

Its subcellular location is the nucleus. Transcriptional repressor. May have histone methyltransferase activity. Negatively regulates shh signaling activity in pMN progenitor cells which prevents their switch from motor neuron to oligodendrocyte precursor cell production. Independently of shh activity, also regulates oligodendrocyte formation. In Danio rerio (Zebrafish), this protein is Zinc finger protein 488.